The chain runs to 331 residues: Lactamase-like protein nscB (331 aa).

Zn(2+)-binding residues include histidine 106, histidine 108, aspartate 110, and histidine 111. Aspartate 110 (proton donor/acceptor) is an active-site residue.

The protein belongs to the metallo-beta-lactamase superfamily. Zn(2+) serves as cofactor.

It participates in secondary metabolite biosynthesis. Its function is as follows. Lactamase-like protein; part of the gene cluster that mediates the biosynthesis of neosartoricin B, a prenylated anthracenone that probably exhibits T-cell antiproliferative activity, suggestive of a physiological role as an immunosuppressive agent. The non-reducing polyketide synthase nscA probably synthesizes and cyclizes the decaketide backbone. The hydrolase nscB then mediates the product release through hydrolysis followed by spontaneous decarboxylation. The prenyltransferase nscD catalyzes the addition of the dimethylallyl group to the aromatic C5. The FAD-dependent monooxygenase nscC is then responsible for the stereospecific hydroxylation at C2. Neosartoricin B can be converted into two additional compounds neosartoricins C and D. Neosartoricin C is a spirocyclic compound that is cyclized through the attack of C3 hydroxyl on C14, followed by dehydration. On the other hand, neosartoricin D is a further cyclized compound in which attack of C2 on C14 in neosartoricin C results in the formation of the acetal-containing dioxabicyclo-octanone ring. Both of these compounds are novel and possibly represent related metabolites of the gene cluster. This Trichophyton equinum (strain ATCC MYA-4606 / CBS 127.97) (Horse ringworm fungus) protein is Lactamase-like protein nscB.